A 590-amino-acid chain; its full sequence is L-fucose isomerase (590 aa).

Residues Glu337 and Asp361 each act as proton acceptor in the active site. Mn(2+) is bound by residues Glu337, Asp361, and His528.

This sequence belongs to the L-fucose isomerase family. Requires Mn(2+) as cofactor.

It is found in the cytoplasm. The catalysed reaction is L-fucose = L-fuculose. The protein operates within carbohydrate degradation; L-fucose degradation; L-lactaldehyde and glycerone phosphate from L-fucose: step 1/3. Functionally, converts the aldose L-fucose into the corresponding ketose L-fuculose. In Bacteroides fragilis (strain ATCC 25285 / DSM 2151 / CCUG 4856 / JCM 11019 / LMG 10263 / NCTC 9343 / Onslow / VPI 2553 / EN-2), this protein is L-fucose isomerase.